A 257-amino-acid polypeptide reads, in one-letter code: Trans-aconitate 2-methyltransferase (257 aa).

Belongs to the methyltransferase superfamily. Tam family.

The protein resides in the cytoplasm. The enzyme catalyses trans-aconitate + S-adenosyl-L-methionine = (E)-3-(methoxycarbonyl)pent-2-enedioate + S-adenosyl-L-homocysteine. Its function is as follows. Catalyzes the S-adenosylmethionine monomethyl esterification of trans-aconitate. In Sinorhizobium medicae (strain WSM419) (Ensifer medicae), this protein is Trans-aconitate 2-methyltransferase.